We begin with the raw amino-acid sequence, 111 residues long: Colipase (111 aa).

The N-terminal stretch at Met1–Ala17 is a signal peptide. Residues Ala18–Arg22 constitute a propeptide, enterostatin, activation peptide. Disulfide bonds link Cys34–Cys45, Cys40–Cys56, Cys44–Cys78, Cys66–Cys86, and Cys80–Cys104.

This sequence belongs to the colipase family. Forms a 1:1 stoichiometric complex with pancreatic lipase. Expressed by the pancreas.

Its subcellular location is the secreted. Colipase is a cofactor of pancreatic lipase. It allows the lipase to anchor itself to the lipid-water interface. Without colipase the enzyme is washed off by bile salts, which have an inhibitory effect on the lipase. Functionally, enterostatin has a biological activity as a satiety signal. In Myocastor coypus (Coypu), this protein is Colipase (CLPS).